Here is a 151-residue protein sequence, read N- to C-terminus: D-aminoacyl-tRNA deacylase (151 aa).

A Gly-cisPro motif, important for rejection of L-amino acids motif is present at residues 137–138 (GP).

The protein belongs to the DTD family. In terms of assembly, homodimer.

Its subcellular location is the cytoplasm. The catalysed reaction is glycyl-tRNA(Ala) + H2O = tRNA(Ala) + glycine + H(+). It carries out the reaction a D-aminoacyl-tRNA + H2O = a tRNA + a D-alpha-amino acid + H(+). Its function is as follows. An aminoacyl-tRNA editing enzyme that deacylates mischarged D-aminoacyl-tRNAs. Also deacylates mischarged glycyl-tRNA(Ala), protecting cells against glycine mischarging by AlaRS. Acts via tRNA-based rather than protein-based catalysis; rejects L-amino acids rather than detecting D-amino acids in the active site. By recycling D-aminoacyl-tRNA to D-amino acids and free tRNA molecules, this enzyme counteracts the toxicity associated with the formation of D-aminoacyl-tRNA entities in vivo and helps enforce protein L-homochirality. The chain is D-aminoacyl-tRNA deacylase from Azoarcus sp. (strain BH72).